The chain runs to 67 residues: (2R)-sulfolactate sulfo-lyase subunit alpha (67 aa).

(2R)-sulfolactate sulfo-lyase is composed of a SuyA and a SuyB subunit.

The protein resides in the cytoplasm. It carries out the reaction (2R)-3-sulfolactate = sulfite + pyruvate + H(+). Together with SuyB, desulfonates sulfolactate to pyruvate and sulfite. The chain is (2R)-sulfolactate sulfo-lyase subunit alpha (suyA) from Paracoccus pantotrophus (Thiosphaera pantotropha).